The chain runs to 334 residues: Sulfhydrogenase 2 subunit beta (334 aa).

2 4Fe-4S ferredoxin-type domains span residues 220-250 (KVWKKYAEKCLGCGNCTIVCPTCRCYEVCDT) and 294-328 (CKNYFDPEAGFNCVGCGRCDEFCPARIEHVKVLDE). The [4Fe-4S] cluster site is built by C229, C232, C235, C239, C306, C309, C312, and C316.

As to quaternary structure, dimer of heterotetramer of alpha, beta, gamma and delta subunits. The nickel-containing alpha and delta subunits constitute the hydrogenase activity. The beta and gamma subunits (flavin-containing dimer) constitute the sulfur reductase activity. [4Fe-4S] cluster serves as cofactor.

The protein resides in the cytoplasm. It catalyses the reaction n sulfur + H2 = (n-1) sulfur + hydrogen sulfide + H(+). Its function is as follows. Part of a bifunctional enzyme complex that functions as a hydrogen-evolving hydrogenase with sulfur-reducing activity. May play a role in hydrogen cycling during fermentative growth. Activity exhibited with NAD in addition to NADPH. The beta and gamma subunits form the sulfur-reducing component that catalyzes the cytoplasmic production of hydrogen sulfide in the presence of elemental sulfur. The protein is Sulfhydrogenase 2 subunit beta of Pyrococcus furiosus (strain ATCC 43587 / DSM 3638 / JCM 8422 / Vc1).